Consider the following 419-residue polypeptide: Oxamate carbamoyltransferase subunit AllG (419 aa).

Belongs to the AllG family. In terms of assembly, the OXTCase is composed of 3 subunits, AllF, AllG and AllH. Requires Mg(2+) as cofactor.

The enzyme catalyses oxamate + carbamoyl phosphate = N-carbamoyl-2-oxoglycine + phosphate. It participates in nitrogen metabolism; (S)-allantoin degradation. Functionally, component of a carbamoyltransferase involved in the anaerobic nitrogen utilization via the assimilation of allantoin. Catalyzes the conversion of oxalurate (N-carbamoyl-2-oxoglycine) to oxamate and carbamoyl phosphate. The polypeptide is Oxamate carbamoyltransferase subunit AllG (Escherichia coli (strain K12)).